The primary structure comprises 357 residues: MTRVIVVDDSAFFRSSITKMLTQDSEIEVIGVAKDGIEGLEKIKNLKPDVVTMDIEMPKLDGISTLKIIMDEMPLPVIMVSSLTKEGAEATLKALEFGAVDFIPKYPGNSLASMDLAALSSDLCTKVKAVAARAKRFPLKRIRKDKVPIISPVKKDFFTSPNHSERSRRDIIAIGVSTGGPPAVQKVLSELPETFPACILIAQHMPAAFTKPFAERLNSMCKISVKEAEHGNPIKNGIAYVCPGGRHLRLDLKGALPQISVVSEPSTALYKPSANVLMESVGKSMGGRSVGVIMTGMGSDGVEGMRVLKSKGGFVIAQSEASCVVYGMPKAIVDGGLADEVVDLDNIAERVASALYK.

The 118-residue stretch at 3 to 120 folds into the Response regulatory domain; that stretch reads RVIVVDDSAF…LASMDLAALS (118 aa). D54 bears the 4-aspartylphosphate mark. One can recognise a CheB-type methylesterase domain in the interval 165–357; it reads ERSRRDIIAI…AERVASALYK (193 aa). Residues S177, H204, and D300 contribute to the active site.

The protein belongs to the CheB family. In terms of processing, phosphorylated by CheA. Phosphorylation of the N-terminal regulatory domain activates the methylesterase activity.

It is found in the cytoplasm. The enzyme catalyses [protein]-L-glutamate 5-O-methyl ester + H2O = L-glutamyl-[protein] + methanol + H(+). It carries out the reaction L-glutaminyl-[protein] + H2O = L-glutamyl-[protein] + NH4(+). Its function is as follows. Involved in chemotaxis. Part of a chemotaxis signal transduction system that modulates chemotaxis in response to various stimuli. Catalyzes the demethylation of specific methylglutamate residues introduced into the chemoreceptors (methyl-accepting chemotaxis proteins or MCP) by CheR. Also mediates the irreversible deamidation of specific glutamine residues to glutamic acid. In Lawsonia intracellularis (strain PHE/MN1-00), this protein is Protein-glutamate methylesterase/protein-glutamine glutaminase.